We begin with the raw amino-acid sequence, 286 residues long: Myb family transcription factor PHL7 (286 aa).

The HTH myb-type domain occupies 12–72 (HASKQRLRWT…HLQKYRLAKY (61 aa)). The segment at residues 43–68 (PKGVLRVMGVQGLTIYHVKSHLQKYR) is a DNA-binding region (H-T-H motif). Positions 74 to 97 (PDSSSEGKKTDKKESGDMLSGLDG) are disordered. Over residues 78-89 (SEGKKTDKKESG) the composition is skewed to basic and acidic residues. Residues 104–124 (TEALKLQMEVQKRLHEQLEVQ) are a coiled coil. Residues 117–122 (LHEQLE) carry the LHEQLE motif. The interval 152–227 (LGEPSAPVTG…TGEERLSKKP (76 aa)) is disordered.

Belongs to the MYB-CC family.

The protein resides in the nucleus. This is Myb family transcription factor PHL7 from Arabidopsis thaliana (Mouse-ear cress).